Consider the following 398-residue polypeptide: MSETIVSEQTVSEFSPASADASQSVKASVGKINLLDLNRQQMRDLFMSMGEKPFRADQVMKWMYHYCCDDFNQMTDINKVFRTKLQEIAEIRAPEVVDEQRSSDGTIKWAILVGGQRVETVYIPEEERATLCVSSQVGCALECKFCSTAQQGFNRNLRVSEIIGQVWRAAKIIGAFKVTGQRPITNVVMMGMGEPLLNLTNVVPAMEIMLDDFGFGLSKRRVTLSTSGVVPALDKLGDMIDVALAISLHAPTDDIRNEIMPINKKYNIEMFLSAVRRYLEKSNANQGRVTVEYVMLDHINDGTEHAHQLAECLKDTPCKINLIPWNPFPGAPYGRSSNSRVDRFSKVLMEYGFTTIVRKTRGDDIDAACGQLAGEVVDRTKRTLKKKMAGEPIAVKAV.

The active-site Proton acceptor is glutamate 119. Residues 125-364 enclose the Radical SAM core domain; it reads EEERATLCVS…TIVRKTRGDD (240 aa). The cysteines at positions 132 and 369 are disulfide-linked. [4Fe-4S] cluster-binding residues include cysteine 139, cysteine 143, and cysteine 146. Residues 193-194, serine 225, 247-249, and asparagine 326 each bind S-adenosyl-L-methionine; these read GE and SLH. Cysteine 369 acts as the S-methylcysteine intermediate in catalysis.

Belongs to the radical SAM superfamily. RlmN family. [4Fe-4S] cluster serves as cofactor.

The protein resides in the cytoplasm. It catalyses the reaction adenosine(2503) in 23S rRNA + 2 reduced [2Fe-2S]-[ferredoxin] + 2 S-adenosyl-L-methionine = 2-methyladenosine(2503) in 23S rRNA + 5'-deoxyadenosine + L-methionine + 2 oxidized [2Fe-2S]-[ferredoxin] + S-adenosyl-L-homocysteine. The enzyme catalyses adenosine(37) in tRNA + 2 reduced [2Fe-2S]-[ferredoxin] + 2 S-adenosyl-L-methionine = 2-methyladenosine(37) in tRNA + 5'-deoxyadenosine + L-methionine + 2 oxidized [2Fe-2S]-[ferredoxin] + S-adenosyl-L-homocysteine. Specifically methylates position 2 of adenine 2503 in 23S rRNA and position 2 of adenine 37 in tRNAs. m2A2503 modification seems to play a crucial role in the proofreading step occurring at the peptidyl transferase center and thus would serve to optimize ribosomal fidelity. This Pectobacterium atrosepticum (strain SCRI 1043 / ATCC BAA-672) (Erwinia carotovora subsp. atroseptica) protein is Dual-specificity RNA methyltransferase RlmN.